A 397-amino-acid polypeptide reads, in one-letter code: Ribosomal RNA large subunit methyltransferase I (397 aa).

Residues 2 to 78 enclose the PUA domain; the sequence is TPAIYLVKGR…EQEPIDRDFF (77 aa).

Belongs to the methyltransferase superfamily. RlmI family.

The protein resides in the cytoplasm. The enzyme catalyses cytidine(1962) in 23S rRNA + S-adenosyl-L-methionine = 5-methylcytidine(1962) in 23S rRNA + S-adenosyl-L-homocysteine + H(+). Its function is as follows. Specifically methylates the cytosine at position 1962 (m5C1962) of 23S rRNA. The protein is Ribosomal RNA large subunit methyltransferase I of Vibrio cholerae serotype O1 (strain ATCC 39541 / Classical Ogawa 395 / O395).